We begin with the raw amino-acid sequence, 96 residues long: MKLPQLLLILLFVVLADSVQPKRCFSNVAGYCRKRCRLVEISEMGCLHGKYCCVNELENKRHKKDTVVEQPMEPRDKSKVQDYMVLPTITYYTITI.

The N-terminal stretch at 1-21 (MKLPQLLLILLFVVLADSVQP) is a signal peptide. Intrachain disulfides connect C24-C52, C32-C46, and C36-C53.

This sequence belongs to the beta-defensin family.

It is found in the secreted. Its function is as follows. Has antibacterial activity. The protein is Beta-defensin 20 (Defb20) of Rattus norvegicus (Rat).